Here is a 359-residue protein sequence, read N- to C-terminus: Tricarboxylate transport protein A, mitochondrial (359 aa).

3 Solcar repeats span residues 71–159 (THPW…LSNP), 170–256 (KASL…LRNW), and 266–351 (MHPL…VVKL). 4 consecutive transmembrane segments (helical) span residues 77 to 97 (IFAGGIAGGIEICITFPTEYV), 171 to 191 (ASLLCGLGAGIAEAVLVVCPM), 269 to 289 (LVTAMFGATAGAASVFGNTPL), and 336 to 356 (LDVAIVFVLYEEVVKLLNNVW).

This sequence belongs to the mitochondrial carrier (TC 2.A.29) family. Possesses a short cleavable presequence, which, however, is found to be dispensable both for targeting to mitochondria and insertion into the inner membrane. However, the presequence is required to keep SLC25A1 in a soluble state and thus in an import-competent state. Mature SLC25A1 lacking the presequence is prone to aggregation.

Its subcellular location is the mitochondrion inner membrane. It catalyses the reaction (S)-malate(in) + citrate(out) = (S)-malate(out) + citrate(in). The enzyme catalyses D-threo-isocitrate(in) + citrate(out) = D-threo-isocitrate(out) + citrate(in). The catalysed reaction is citrate(out) + succinate(in) = citrate(in) + succinate(out). It carries out the reaction cis-aconitate(in) + citrate(out) = cis-aconitate(out) + citrate(in). It catalyses the reaction trans-aconitate(in) + citrate(out) = trans-aconitate(out) + citrate(in). The enzyme catalyses phosphoenolpyruvate(in) + citrate(out) = phosphoenolpyruvate(out) + citrate(in). The catalysed reaction is maleate(in) + citrate(out) = maleate(out) + citrate(in). Functionally, mitochondrial electroneutral antiporter that exports citrate from the mitochondria into the cytosol in exchange for malate. Also able to mediate the exchange of citrate for isocitrate, phosphoenolpyruvate, cis-aconitate and to a lesser extent trans-aconitate, maleate and succinate. In the cytoplasm, citrate plays important roles in fatty acid and sterol synthesis, regulation of glycolysis, protein acetylation, and other physiopathological processes. The sequence is that of Tricarboxylate transport protein A, mitochondrial from Danio rerio (Zebrafish).